The primary structure comprises 146 residues: Hemoglobin subunit beta (146 aa).

At V1 the chain carries N-acetylvaline. The region spanning 2–146 (HLTADEKTAV…VANALAHKYH (145 aa)) is the Globin domain. A Phosphothreonine modification is found at T12. At S44 the chain carries Phosphoserine. K59 bears the N6-acetyllysine mark. H63 provides a ligand contact to heme b. K82 bears the N6-acetyllysine mark. Residue H92 coordinates heme b. C93 bears the S-nitrosocysteine mark. K144 is subject to N6-acetyllysine.

The protein belongs to the globin family. As to quaternary structure, heterotetramer of two alpha chains and two beta chains. As to expression, red blood cells.

In terms of biological role, involved in oxygen transport from the lung to the various peripheral tissues. This Procyon lotor (Raccoon) protein is Hemoglobin subunit beta (HBB).